The sequence spans 345 residues: Phenylalanine--tRNA ligase alpha subunit (345 aa).

E266 contributes to the Mg(2+) binding site.

The protein belongs to the class-II aminoacyl-tRNA synthetase family. Phe-tRNA synthetase alpha subunit type 1 subfamily. As to quaternary structure, tetramer of two alpha and two beta subunits. Requires Mg(2+) as cofactor.

Its subcellular location is the cytoplasm. It catalyses the reaction tRNA(Phe) + L-phenylalanine + ATP = L-phenylalanyl-tRNA(Phe) + AMP + diphosphate + H(+). This Methylibium petroleiphilum (strain ATCC BAA-1232 / LMG 22953 / PM1) protein is Phenylalanine--tRNA ligase alpha subunit.